Consider the following 427-residue polypeptide: Glucose-6-phosphate isomerase (427 aa).

The active-site Proton donor is the Glu277. Residues His298 and Lys414 contribute to the active site.

Belongs to the GPI family.

It is found in the cytoplasm. It catalyses the reaction alpha-D-glucose 6-phosphate = beta-D-fructose 6-phosphate. The protein operates within carbohydrate biosynthesis; gluconeogenesis. It functions in the pathway carbohydrate degradation; glycolysis; D-glyceraldehyde 3-phosphate and glycerone phosphate from D-glucose: step 2/4. In terms of biological role, catalyzes the reversible isomerization of glucose-6-phosphate to fructose-6-phosphate. In Mycoplasma mycoides subsp. mycoides SC (strain CCUG 32753 / NCTC 10114 / PG1), this protein is Glucose-6-phosphate isomerase.